The sequence spans 67 residues: Probable pilin MJ1400 (67 aa).

A propeptide spanning residues 1 to 13 (MKFIMKFIKSNKG) is cleaved from the precursor. The QXSXEXXXL signature appears at 14 to 22 (QISLEFSLL).

In terms of processing, the N-terminus is cleaved by the prepilin peptidase EppA, which recognizes the class III signal sequence.

It is found in the secreted. The protein resides in the cell surface. The protein localises to the fimbrium. The chain is Probable pilin MJ1400 from Methanocaldococcus jannaschii (strain ATCC 43067 / DSM 2661 / JAL-1 / JCM 10045 / NBRC 100440) (Methanococcus jannaschii).